The following is a 337-amino-acid chain: Inositol 2-dehydrogenase (337 aa).

This sequence belongs to the Gfo/Idh/MocA family. As to quaternary structure, homotetramer.

It carries out the reaction myo-inositol + NAD(+) = scyllo-inosose + NADH + H(+). Involved in the oxidation of myo-inositol (MI) to 2-keto-myo-inositol (2KMI or 2-inosose). This chain is Inositol 2-dehydrogenase, found in Pseudarthrobacter chlorophenolicus (strain ATCC 700700 / DSM 12829 / CIP 107037 / JCM 12360 / KCTC 9906 / NCIMB 13794 / A6) (Arthrobacter chlorophenolicus).